A 240-amino-acid polypeptide reads, in one-letter code: Dihydromonapterin reductase (240 aa).

Y152 acts as the Proton acceptor in catalysis.

Belongs to the short-chain dehydrogenases/reductases (SDR) family. FolM subfamily.

It catalyses the reaction (6S)-5,6,7,8-tetrahydrofolate + NADP(+) = 7,8-dihydrofolate + NADPH + H(+). The catalysed reaction is 7,8-dihydromonapterin + NADPH + H(+) = 5,6,7,8-tetrahydromonapterin + NADP(+). In terms of biological role, catalyzes the reduction of dihydromonapterin to tetrahydromonapterin. Also has lower activity with dihydrofolate. This chain is Dihydromonapterin reductase (folM), found in Escherichia coli O6:H1 (strain CFT073 / ATCC 700928 / UPEC).